A 395-amino-acid polypeptide reads, in one-letter code: Phosphoglycerate kinase (395 aa).

Residues 21–23, Arg36, 59–62, Arg120, and Arg153 each bind substrate; these read DFN and HLGR. Residues Lys203, Glu325, and 351–354 contribute to the ATP site; that span reads GGDS.

The protein belongs to the phosphoglycerate kinase family. In terms of assembly, monomer.

It is found in the cytoplasm. The catalysed reaction is (2R)-3-phosphoglycerate + ATP = (2R)-3-phospho-glyceroyl phosphate + ADP. It participates in carbohydrate degradation; glycolysis; pyruvate from D-glyceraldehyde 3-phosphate: step 2/5. This chain is Phosphoglycerate kinase, found in Roseiflexus castenholzii (strain DSM 13941 / HLO8).